A 124-amino-acid polypeptide reads, in one-letter code: MAAELHVELVAADRSVWSGEATLVVARTTSGDIGVMPGHQPLLGVLESGPVTIRTSEGGTVIAAVHGGFISFADDKLSLLAEIAELADEIDVERAERALELAKSDADAAAQRRADVRLRAVAVR.

It belongs to the ATPase epsilon chain family. In terms of assembly, F-type ATPases have 2 components, CF(1) - the catalytic core - and CF(0) - the membrane proton channel. CF(1) has five subunits: alpha(3), beta(3), gamma(1), delta(1), epsilon(1). CF(0) has three main subunits: a, b and c.

Its subcellular location is the cell membrane. Functionally, produces ATP from ADP in the presence of a proton gradient across the membrane. The sequence is that of ATP synthase epsilon chain from Streptomyces griseus subsp. griseus (strain JCM 4626 / CBS 651.72 / NBRC 13350 / KCC S-0626 / ISP 5235).